A 163-amino-acid polypeptide reads, in one-letter code: Nucleotide-binding protein BCG9842_B4128 (163 aa).

The protein belongs to the YajQ family.

Nucleotide-binding protein. The chain is Nucleotide-binding protein BCG9842_B4128 from Bacillus cereus (strain G9842).